The sequence spans 749 residues: Triacylglycerol lipase 5 (749 aa).

Residues 54–59 (HAISYD) carry the HXXXXD acyltransferase motif motif. Positions 183-388 (LVLSGGSTFG…DNDMPISRLS (206 aa)) constitute a PNPLA domain. The short motif at 214–218 (GSSAG) is the GXSXG element. Ser216 acts as the Nucleophile in catalysis. N-linked (GlcNAc...) asparagine glycosylation is found at Asn270, Asn289, Asn297, Asn304, and Asn321. Asp375 serves as the catalytic Proton acceptor. Asn474 and Asn589 each carry an N-linked (GlcNAc...) asparagine glycan. Residues 585–643 (IKSPNKTAAPGRFPLQPLPSPSSTFNKRKMDMLSPSPSPSTSPQRSKSSFTQQGTRQKA) are disordered. The segment covering 623–633 (PSTSPQRSKSS) has biased composition (low complexity). A compositionally biased stretch (polar residues) spans 634–643 (FTQQGTRQKA). The residue at position 645 (Ser645) is a Phosphoserine. N-linked (GlcNAc...) asparagine glycans are attached at residues Asn680, Asn714, and Asn742.

It is found in the lipid droplet. The catalysed reaction is a triacylglycerol + H2O = a diacylglycerol + a fatty acid + H(+). It catalyses the reaction 1-(9Z-octadecenoyl)-sn-glycero-3-phosphate + (9Z)-octadecenoyl-CoA = 1,2-di-(9Z-octadecenoyl)-sn-glycero-3-phosphate + CoA. It carries out the reaction 1-(9Z-octadecenoyl)-sn-glycero-3-phosphate + hexadecanoyl-CoA = 1-hexadecanoyl-2-(9Z-octadecenoyl)-sn-glycero-3-phosphate + CoA. Its activity is regulated as follows. Loses its lipolytic activity in cells lacking nonpolar lipids, but retains its side activity as lysophospholipid acyltransferase. Lipid particle-localized triacylglycerol (TAG) lipase. The lipid droplet/particle is a lipid storage compartment which serves as a depot of energy and building blocks for membrane lipid biosynthesis. Involved in the mobilization of the non-polar storage lipids triacylglycerols (TAGs) from lipid particles by hydrolysis of TAGs, releasing and supplying specific fatty acids to the appropriate metabolic pathways. Also catalyzes the acylation of lysophosphatidic acid (LPA). This Saccharomyces cerevisiae (strain ATCC 204508 / S288c) (Baker's yeast) protein is Triacylglycerol lipase 5 (TGL5).